A 692-amino-acid polypeptide reads, in one-letter code: Protein arginine N-methyltransferase 7 (692 aa).

2 consecutive SAM-dependent MTase PRMT-type domains span residues 14–359 (ENSW…YSLW) and 368–692 (AKTV…QEKR).

It belongs to the class I-like SAM-binding methyltransferase superfamily. Protein arginine N-methyltransferase family. PRMT7 subfamily.

Essential arginine methyltransferase that can both catalyze the formation of omega-N monomethylarginine (MMA) and symmetrical dimethylarginine (sDMA). Specifically mediates the symmetrical dimethylation of arginine residues in the small nuclear ribonucleoproteins SmD1 and SmD3. The sequence is that of Protein arginine N-methyltransferase 7 (Art7) from Drosophila pseudoobscura pseudoobscura (Fruit fly).